Consider the following 159-residue polypeptide: uncharacterized protein (159 aa).

The signal sequence occupies residues 1-20 (MKKIIAMSLLMFSVVMSVNA).

This is an uncharacterized protein from Pasteurella multocida (strain Pm70).